A 269-amino-acid chain; its full sequence is Undecaprenyl-diphosphatase (269 aa).

A run of 6 helical transmembrane segments spans residues 43–63, 82–102, 108–128, 188–208, 222–242, and 249–269; these read KGKVFEIVIQLGAILAVCWEY, FILNLFVAFLPAAIFGLLLHG, LFSSITVACALIVGGFAILLV, ATEFSFFLAIPVMLAATFYDV, MFAVGFITAFLAALVAIKTLI, and DFKGFAYYRIVLGIIVLAYYW.

The protein belongs to the UppP family.

The protein localises to the cell inner membrane. It carries out the reaction di-trans,octa-cis-undecaprenyl diphosphate + H2O = di-trans,octa-cis-undecaprenyl phosphate + phosphate + H(+). Catalyzes the dephosphorylation of undecaprenyl diphosphate (UPP). Confers resistance to bacitracin. The polypeptide is Undecaprenyl-diphosphatase (Methylobacillus flagellatus (strain ATCC 51484 / DSM 6875 / VKM B-1610 / KT)).